The primary structure comprises 140 residues: uncharacterized protein (140 aa).

One can recognise a VOC domain in the interval Thr-4–Gly-127.

This is an uncharacterized protein from Pseudomonas aeruginosa (strain ATCC 15692 / DSM 22644 / CIP 104116 / JCM 14847 / LMG 12228 / 1C / PRS 101 / PAO1).